Here is a 102-residue protein sequence, read N- to C-terminus: 10 kDa heat shock protein, mitochondrial (102 aa).

It belongs to the GroES chaperonin family. As to quaternary structure, homohexamer.

It localises to the mitochondrion matrix. In terms of biological role, eukaryotic CPN10 homolog which is essential for mitochondrial protein biogenesis, together with CPN60. Binds to CPN60 in the presence of Mg-ATP and suppresses the ATPase activity of the latter. This Schistosoma japonicum (Blood fluke) protein is 10 kDa heat shock protein, mitochondrial.